The chain runs to 475 residues: Cysteine--tRNA ligase (475 aa).

C28 serves as a coordination point for Zn(2+). The short motif at P30–H40 is the 'HIGH' region element. Positions 208, 233, and 237 each coordinate Zn(2+). Positions K265–S269 match the 'KMSKS' region motif. K268 is an ATP binding site.

This sequence belongs to the class-I aminoacyl-tRNA synthetase family. It depends on Zn(2+) as a cofactor.

It localises to the cytoplasm. The enzyme catalyses tRNA(Cys) + L-cysteine + ATP = L-cysteinyl-tRNA(Cys) + AMP + diphosphate. This Methanococcus vannielii (strain ATCC 35089 / DSM 1224 / JCM 13029 / OCM 148 / SB) protein is Cysteine--tRNA ligase.